The primary structure comprises 176 residues: MWRRIVSSQLKTLAADVVAASPRRSIAATTRPVGFYLAANRSAISASSFVIPRRFSSDSVETPATKKVEDVMPIATGHEKEELEAELEGRRLDDIDFPEGPFGTKEAPAIVKSYYDKRIVGCPGGEGEDEHDVVWFWLEKGKSFECPVCTQYFELEVVGPGGPPDGHGDEDDEHHH.

The N-terminal 55 residues, M1–F55, are a transit peptide targeting the mitochondrion. The Zn(2+) site is built by C122, C146, and C149. The disordered stretch occupies residues V157–H176.

The protein belongs to the cytochrome c oxidase subunit 5B (TC 3.D.4.11) family.

It is found in the mitochondrion inner membrane. This protein is one of the nuclear-coded polypeptide chains of cytochrome c oxidase, the terminal oxidase in mitochondrial electron transport. This chain is Cytochrome c oxidase subunit 5b-1, mitochondrial (COX5B-1), found in Arabidopsis thaliana (Mouse-ear cress).